Reading from the N-terminus, the 394-residue chain is Lipid-A-disaccharide synthase (394 aa).

Belongs to the LpxB family.

It carries out the reaction 2-N,3-O-bis[(3R)-3-hydroxytetradecanoyl]-alpha-D-glucosaminyl 1-phosphate + UDP-2-N,3-O-bis[(3R)-3-hydroxytetradecanoyl]-alpha-D-glucosamine = lipid A disaccharide (E. coli) + UDP + H(+). The enzyme catalyses a lipid X + a UDP-2-N,3-O-bis[(3R)-3-hydroxyacyl]-alpha-D-glucosamine = a lipid A disaccharide + UDP + H(+). It participates in glycolipid biosynthesis; lipid IV(A) biosynthesis; lipid IV(A) from (3R)-3-hydroxytetradecanoyl-[acyl-carrier-protein] and UDP-N-acetyl-alpha-D-glucosamine: step 5/6. Functionally, condensation of UDP-2,3-diacylglucosamine and 2,3-diacylglucosamine-1-phosphate to form lipid A disaccharide, a precursor of lipid A, a phosphorylated glycolipid that anchors the lipopolysaccharide to the outer membrane of the cell. The polypeptide is Lipid-A-disaccharide synthase (Yersinia pestis).